The primary structure comprises 1226 residues: MAGSNIKVQIEKQLSERILLIDGGMGTMIQGYKFEEKDYRGGRFNQWHCDLKGNNDLLVLSQPQIIRDIHEAYLEAGADILETNTFNATTIAMADYDMESLSEEINFEAAKLAREVADKWTEKTPNKPRYVAGVLGPTNRTCSISPDVNDPGFRNVSFDELVEAYSESTRALIRGGSDLILIETIFDTLNAKACSFAVESVFEELGITLPVMISGTITDASGRTLSGQTTEAFYNALRHVKPISFGLNCALGPDELREYVSELSRISECYVSAHPNAGLPNAFGEYDLSPEDMAEHVAEWASSGFLNLIGGCCGTTPEHIRQMALVVEGVKPRQLPELPVACRLSGLEPLTIEKDSLFINVGERTNVTGSARFKRLIKEELYDEALSVAQEQVENGAQIIDINMDEGMLDAEACMVRFLNLCASEPEISKVPVMVDSSKWEVIEAGLKCIQGKGIVNSISLKEGKEKFVHQAKLIRRYGAAVIVMAFDEVGQADTRERKIEICTNAYNILVDEVGFPPEDIIFDPNIFAVATGIDEHNNYAVDFIEAVGDIKRTLPHAMISGGVSNVSFSFRGNNYVREAIHAVFLYHCFKNGMDMGIVNAGQLEIYDNVPEDLREAVEDVVLNRRDDSTERLLDIATEYLERAVGKVEDKSALEWRDWPVEKRLEHSLVKGITEFIVEDTEEARINAERPIEVIEGPLMDGMNVVGDLFGEGKMFLPQVVKSARVMKQAVAHLEPFINASKEVGATNGKILLATVKGDVHDIGKNIVGVVLQCNNYEIIDLGVMVSCETILKVAKEENVDIIGLSGLITPSLDEMVHVAKEMERQGFDLPLLIGGATTSKAHTAVKIEQNYSQPVVYVNNASRAVGVCTSLLSNELKPSFVEKLDIDYERVREQHSRKQPRTKPVTLEVARANKVAIDWASYTPPVPLKPGVHIFDNFDVSTLRNYIDWTPFFMTWSLVGKYPKILEHEEVGEEAKRLFKDANDLLDRVEKEGLLKARGMCALFPASSVGDDIEVYTDESRTTVAKVLHNLRQQTEKPKGFNYCLSDYIAPKESGKNDWIGGFAVTGGIGERELADEYKANGDDYNAIMIQAVADRLAEAFAEYLHEKVRKEIWGYSPNETLSNDDLIREKYQGIRPAPGYPACPEHTEKGALWELMNVEESIGMSLTSSYAMWPGASVSGMYFSHPDSRYFAIAQIQQDQAESYADRKGWNMLEAEKWLGPNLN.

Residues 7–327 enclose the Hcy-binding domain; sequence KVQIEKQLSE…EHIRQMALVV (321 aa). Zn(2+) contacts are provided by Cys249, Cys312, and Cys313. Residues 358–619 form the Pterin-binding domain; sequence FINVGERTNV…VPEDLREAVE (262 aa). In terms of domain architecture, B12-binding N-terminal spans 652–746; sequence SALEWRDWPV…FINASKEVGA (95 aa). Residues Glu696, 758-762, His761, Ser806, Thr810, and Ala862 each bind methylcob(III)alamin; that span reads GDVHD. A B12-binding domain is found at 748-883; that stretch reads NGKILLATVK…SNELKPSFVE (136 aa). An AdoMet activation domain is found at 899–1226; that stretch reads KQPRTKPVTL…AEKWLGPNLN (328 aa). Residues Asp949, Arg1137, and 1192–1193 contribute to the S-adenosyl-L-methionine site; that span reads YF.

It belongs to the vitamin-B12 dependent methionine synthase family. Methylcob(III)alamin is required as a cofactor. Requires Zn(2+) as cofactor.

It catalyses the reaction (6S)-5-methyl-5,6,7,8-tetrahydrofolate + L-homocysteine = (6S)-5,6,7,8-tetrahydrofolate + L-methionine. It participates in amino-acid biosynthesis; L-methionine biosynthesis via de novo pathway; L-methionine from L-homocysteine (MetH route): step 1/1. Catalyzes the transfer of a methyl group from methyl-cobalamin to homocysteine, yielding enzyme-bound cob(I)alamin and methionine. Subsequently, remethylates the cofactor using methyltetrahydrofolate. The chain is Methionine synthase (metH) from Aliivibrio fischeri (Vibrio fischeri).